The chain runs to 214 residues: Adenylate kinase (214 aa).

Position 10–15 (10–15 (GAGKGT)) interacts with ATP. The NMP stretch occupies residues 30–59 (STGDMLRAAVKAGTELGKQAKEIMDAGKLV). Residues threonine 31, arginine 36, 57–59 (KLV), 85–88 (GFPR), and glutamine 92 each bind AMP. The interval 122–159 (GRRVHAASGRVYHVKFNPPKVEDKDDVTGEDLSVRKDD) is LID. ATP is bound by residues arginine 123 and 132-133 (VY). AMP is bound by residues arginine 156 and arginine 167. Arginine 200 contributes to the ATP binding site.

It belongs to the adenylate kinase family. In terms of assembly, monomer.

It localises to the cytoplasm. It carries out the reaction AMP + ATP = 2 ADP. The protein operates within purine metabolism; AMP biosynthesis via salvage pathway; AMP from ADP: step 1/1. Catalyzes the reversible transfer of the terminal phosphate group between ATP and AMP. Plays an important role in cellular energy homeostasis and in adenine nucleotide metabolism. The chain is Adenylate kinase from Pectobacterium atrosepticum (strain SCRI 1043 / ATCC BAA-672) (Erwinia carotovora subsp. atroseptica).